The following is a 680-amino-acid chain: Nodulation protein NolNO (680 aa).

It belongs to the NodU/CmcH family.

The protein resides in the cytoplasm. Involved in the O-carbamoylation of nod factors. This chain is Nodulation protein NolNO (nolO), found in Sinorhizobium fredii (strain NBRC 101917 / NGR234).